A 446-amino-acid chain; its full sequence is Na(+)-translocating NADH-quinone reductase subunit A (446 aa).

This sequence belongs to the NqrA family. In terms of assembly, composed of six subunits; NqrA, NqrB, NqrC, NqrD, NqrE and NqrF.

It catalyses the reaction a ubiquinone + n Na(+)(in) + NADH + H(+) = a ubiquinol + n Na(+)(out) + NAD(+). This reaction is tightly coupled to the Na(+) pumping activity and specifically requires Na(+) for activity. Inhibited by korormicin and 2-N-heptyl-4-hydroxyquinoline N-oxide (HQNO). In terms of biological role, NQR complex catalyzes the reduction of ubiquinone-1 to ubiquinol by two successive reactions, coupled with the transport of Na(+) ions from the cytoplasm to the periplasm. NqrA to NqrE are probably involved in the second step, the conversion of ubisemiquinone to ubiquinol. This chain is Na(+)-translocating NADH-quinone reductase subunit A, found in Vibrio alginolyticus.